We begin with the raw amino-acid sequence, 214 residues long: MLIAIEGVDGAGKRTLVEKLSGAFRAAGRSVATLAFPRYGQSVAADIAAEALHGEHGDLASSVYAMATLFALDRAGAVHTIQGLCRGYDVVILDRYVASNAAYSAARLHENAAGKAAAWVQRIEFARLGLPKPDWQVLLAVSAELAGERSRGRAQRDPGRARDNYERDAELQQRTGAVYAELAAQGWGGRWLVVGADVDPGRLAATLAPPDVPS.

7-14 contacts ATP; it reads GVDGAGKR. Aspartate 9, tyrosine 39, phenylalanine 70, arginine 74, arginine 95, asparagine 100, and tyrosine 103 together coordinate dTMP. Mg(2+) is bound at residue aspartate 9. The segment at 147–159 is LID; it reads GERSRGRAQRDPG. Aspartate 163 and tyrosine 165 together coordinate dTMP. Position 166 (glutamate 166) interacts with Mg(2+).

The protein belongs to the thymidylate kinase family. As to quaternary structure, homodimer. Mg(2+) serves as cofactor.

It carries out the reaction dTMP + ATP = dTDP + ADP. Its pathway is pyrimidine metabolism; dTTP biosynthesis. Its function is as follows. Catalyzes the reversible phosphorylation of deoxythymidine monophosphate (dTMP) to deoxythymidine diphosphate (dTDP), using ATP as its preferred phosphoryl donor. Situated at the junction of both de novo and salvage pathways of deoxythymidine triphosphate (dTTP) synthesis, is essential for DNA synthesis and cellular growth. The polypeptide is Thymidylate kinase (tmk) (Mycobacterium tuberculosis (strain CDC 1551 / Oshkosh)).